Reading from the N-terminus, the 240-residue chain is Phosphatidylserine decarboxylase proenzyme (240 aa).

The Schiff-base intermediate with substrate; via pyruvic acid role is filled by serine 209. Serine 209 carries the pyruvic acid (Ser); by autocatalysis modification.

This sequence belongs to the phosphatidylserine decarboxylase family. PSD-A subfamily. In terms of assembly, heterodimer of a large membrane-associated beta subunit and a small pyruvoyl-containing alpha subunit. It depends on pyruvate as a cofactor. In terms of processing, is synthesized initially as an inactive proenzyme. Formation of the active enzyme involves a self-maturation process in which the active site pyruvoyl group is generated from an internal serine residue via an autocatalytic post-translational modification. Two non-identical subunits are generated from the proenzyme in this reaction, and the pyruvate is formed at the N-terminus of the alpha chain, which is derived from the carboxyl end of the proenzyme. The post-translation cleavage follows an unusual pathway, termed non-hydrolytic serinolysis, in which the side chain hydroxyl group of the serine supplies its oxygen atom to form the C-terminus of the beta chain, while the remainder of the serine residue undergoes an oxidative deamination to produce ammonia and the pyruvoyl prosthetic group on the alpha chain.

Its subcellular location is the cell membrane. The catalysed reaction is a 1,2-diacyl-sn-glycero-3-phospho-L-serine + H(+) = a 1,2-diacyl-sn-glycero-3-phosphoethanolamine + CO2. It functions in the pathway phospholipid metabolism; phosphatidylethanolamine biosynthesis; phosphatidylethanolamine from CDP-diacylglycerol: step 2/2. Its function is as follows. Catalyzes the formation of phosphatidylethanolamine (PtdEtn) from phosphatidylserine (PtdSer). The chain is Phosphatidylserine decarboxylase proenzyme from Mycobacterium avium (strain 104).